The following is a 714-amino-acid chain: Nucleolin (714 aa).

Residues Met1–Glu303 are disordered. N6-acetyllysine is present on residues Lys9, Lys15, and Lys16. Positions Val24–Gly42 are enriched in acidic residues. Phosphoserine is present on residues Ser28, Ser34, Ser40, and Ser41. Positions Ala55–Pro106 are enriched in low complexity. Repeat unit 1 spans residues Ala57–Val64. The tract at residues Ala57–Lys134 is 8 X 8 AA tandem repeats of X-T-P-X-K-K-X-X. Ser66 is subject to Phosphoserine. 4 positions are modified to phosphothreonine: Thr68, Thr75, Thr83, and Thr91. 3 consecutive repeat copies span residues Pro74–Ala81, Val82–Ala89, and Ala90–Val97. Residue Lys95 is modified to N6-acetyllysine. Thr98 is subject to Phosphothreonine. One copy of the 5; truncated repeat lies at Thr98–Val103. Lys101 carries the N6-acetyllysine modification. Repeat 6 spans residues Ala104 to Ala111. Phosphothreonine is present on Thr105. Position 108 is an N6-acetyllysine (Lys108). Thr112 carries the phosphothreonine modification. The residue at position 115 (Lys115) is an N6-acetyllysine. Tandem repeats lie at residues Ala119–Ala126 and Val127–Lys134. The residue at position 120 (Thr120) is a Phosphothreonine. An N6-acetyllysine modification is found at Lys123. Phosphoserine occurs at positions 144 and 157. Over residues Ser144 to Glu170 the composition is skewed to acidic residues. Over residues Pro171–Ala187 the composition is skewed to low complexity. Ser188 is subject to Phosphoserine. The span at Ser188 to Met216 shows a compositional bias: acidic residues. At Thr219 the chain carries Phosphothreonine. Acidic residues predominate over residues Glu240 to Glu272. Over residues Met285–Gly301 the composition is skewed to basic and acidic residues. Residue Lys298 forms a Glycyl lysine isopeptide (Lys-Gly) (interchain with G-Cter in SUMO1); alternate linkage. A Glycyl lysine isopeptide (Lys-Gly) (interchain with G-Cter in SUMO2); alternate cross-link involves residue Lys298. Ser302 carries the post-translational modification Phosphoserine. 2 consecutive RRM domains span residues Phe308–Gly384 and Arg394–Glu467. The residue at position 319 (Lys319) is an N6-acetyllysine. Residue Lys325 forms a Glycyl lysine isopeptide (Lys-Gly) (interchain with G-Cter in SUMO1); alternate linkage. Residue Lys325 forms a Glycyl lysine isopeptide (Lys-Gly) (interchain with G-Cter in SUMO2); alternate linkage. Lys349 is modified (N6-acetyllysine). Ser357 is subject to Phosphoserine. Thr368 is modified (phosphothreonine). Lys371 participates in a covalent cross-link: Glycyl lysine isopeptide (Lys-Gly) (interchain with G-Cter in SUMO2). Lys378 is covalently cross-linked (Glycyl lysine isopeptide (Lys-Gly) (interchain with G-Cter in SUMO2); alternate). Lys378 is modified (N6-acetyllysine; alternate). Lys399 is subject to N6-acetyllysine. Ser402 carries the post-translational modification Phosphoserine. Thr406 is subject to Phosphothreonine. 2 positions are modified to N6-acetyllysine: Lys428 and Lys445. A phosphoserine mark is found at Ser459 and Ser461. Lys468 and Lys477 each carry N6-acetyllysine. Residues Lys486 to Pro560 form the RRM 3 domain. Lys513 participates in a covalent cross-link: Glycyl lysine isopeptide (Lys-Gly) (interchain with G-Cter in SUMO2); alternate. Lys513 carries the post-translational modification N6-acetyllysine; alternate. Lys521 is subject to N6-acetyllysine. At Ser563 the chain carries Phosphoserine. Lys572 bears the N6-acetyllysine mark. The region spanning Lys572–Pro647 is the RRM 4 domain. Lys577 participates in a covalent cross-link: Glycyl lysine isopeptide (Lys-Gly) (interchain with G-Cter in SUMO2); alternate. Lys577 bears the N6-acetyllysine; alternate mark. Residue Ser580 is modified to Phosphoserine. A Glycyl lysine isopeptide (Lys-Gly) (interchain with G-Cter in SUMO1); alternate cross-link involves residue Lys589. Lys589 participates in a covalent cross-link: Glycyl lysine isopeptide (Lys-Gly) (interchain with G-Cter in SUMO2); alternate. 2 positions are modified to phosphoserine: Ser591 and Ser619. Lys624 is covalently cross-linked (Glycyl lysine isopeptide (Lys-Gly) (interchain with G-Cter in SUMO2)). The disordered stretch occupies residues Leu642–Glu714. Lys646 carries the N6-acetyllysine modification. Over residues Glu650 to Asp703 the composition is skewed to gly residues. Asymmetric dimethylarginine occurs at positions 656, 660, 666, 670, 674, 680, 682, 688, and 692. Arg695 carries the asymmetric dimethylarginine; alternate modification. Omega-N-methylarginine; alternate is present on Arg695.

As to quaternary structure, identified in a IGF2BP1-dependent mRNP granule complex containing untranslated mRNAs. Component of the SWAP complex that consists of NPM1, NCL/nucleolin, PARP1 and SWAP70. Component of a complex which is at least composed of HTATSF1/Tat-SF1, the P-TEFb complex components CDK9 and CCNT1, RNA polymerase II, SUPT5H, and NCL/nucleolin. Interacts with AICDA. Interacts with APTX. Interacts with C1QBP. Interacts with ERBB4. Interacts (via C-terminus) with FMR1 isoform 6 (via N-terminus). Interacts with GZF1; this interaction is important for nucleolar localization of GZF1. Interacts with NSUN2. Interacts with NVL. Interacts (via N-terminus domain) with SETX. Interacts (via RRM1 and C-terminal RRM4/Arg/Gly-rich domains) with TERT; the interaction is important for nucleolar localization of TERT. Interacts with WDR46. Interacts with ZFP36. Interacts with LRRC34. Interacts with RRP1B. Interacts with HNRNPU; this interaction occurs during mitosis. Interacts with RIOK1; RIOK1 recruits NCL to PRMT5 for symmetrically methylation. Interacts with ZBTB7B. Interacts with MDK; this interaction promotes NCL clustering and lateral movements of this complex into lipid rafts leading to MDK internalization. Interacts with HDGF. Interacts with ALKBH2. Interacts with IGFBP5; this interaction is necessary for IGFBP5 localization to the nucleus. Interacts with DDX24 (when ubiquitinated); this interaction may be important during ribosome biogenesis. In terms of processing, some glutamate residues are glycylated by TTLL8. This modification occurs exclusively on glutamate residues and results in a glycine chain on the gamma-carboxyl group. Symmetrically methylated by PRMT5.

Its subcellular location is the nucleus. The protein localises to the nucleolus. The protein resides in the cytoplasm. Functionally, nucleolin is the major nucleolar protein of growing eukaryotic cells. It is found associated with intranucleolar chromatin and pre-ribosomal particles. It induces chromatin decondensation by binding to histone H1. It is thought to play a role in pre-rRNA transcription and ribosome assembly. May play a role in the process of transcriptional elongation. Binds RNA oligonucleotides with 5'-UUAGGG-3' repeats more tightly than the telomeric single-stranded DNA 5'-TTAGGG-3' repeats. This chain is Nucleolin (NCL), found in Mesocricetus auratus (Golden hamster).